Reading from the N-terminus, the 218-residue chain is Cytidylate kinase (218 aa).

Residue 11-19 (GPGASGKGT) coordinates ATP.

The protein belongs to the cytidylate kinase family. Type 1 subfamily.

The protein localises to the cytoplasm. It carries out the reaction CMP + ATP = CDP + ADP. It catalyses the reaction dCMP + ATP = dCDP + ADP. The chain is Cytidylate kinase from Neisseria meningitidis serogroup B (strain ATCC BAA-335 / MC58).